The chain runs to 498 residues: MASQGTKRSYEQMETDGERQNATEIRASVGKMIDGIGRFYIQMCTELKLSDYEGRLIQNSLTIERMVLSAFDERRNRYLEEHPSAGKDPKKTGGPIYKRVDGKWMRELVLYDKEEIRRIWRQANNGDDATRGLTHMMIWHSNLNDTTYQRTRALVRTGMDPRMCSLMQGSTLPRRSGAAGAAVKGVGTMVMELIRMIKRGINDRNFWRGENGRKTRGAYERMCNILKGKFQTAAQRAMMDQVRESRNPGNAEIEDLIFLARSALILRGSVAHKSCLPACVYGPAVASGYNFEKEGYSLVGIDPFKLLQNSQVYSLIRPNENPAHKSQLVWMACNSAAFEDLRLLSFIRGTKVSPRGKLSTRGVQIASNENMDTMESSTLELRSRYWAIRTRSGGNTNQQRASAGQISVQPAFSVQRNLPFDKSTIMAAFTGNTEGRTSDMRAEIIRMMEGAKPEEVSFRGRGVFELSDEKATNPIVPSFDMSNEGSYFFGDNAEEYDN.

The Unconventional nuclear localization signal motif lies at 1-18 (MASQGTKRSYEQMETDGE). Positions 1-21 (MASQGTKRSYEQMETDGERQN) are disordered. Residues 8-21 (RSYEQMETDGERQN) are compositionally biased toward basic and acidic residues. The short motif at 198 to 216 (KRGINDRNFWRGENGRKTR) is the Bipartite nuclear localization signal element.

This sequence belongs to the influenza viruses nucleoprotein family. In terms of assembly, homomultimerizes to form the nucleocapsid. May bind host exportin-1/XPO1. Binds to viral genomic RNA. Protein-RNA contacts are mediated by a combination of electrostatic interactions between positively charged residues and the phosphate backbone and planar interactions between aromatic side chains and bases. In terms of processing, late in virus-infected cells, may be cleaved from a 56-kDa protein to a 53-kDa protein by a cellular caspase. This cleavage might be a marker for the onset of apoptosis in infected cells or have a specific function in virus host interaction.

Its subcellular location is the virion. The protein resides in the host nucleus. Functionally, encapsidates the negative strand viral RNA, protecting it from nucleases. The encapsidated genomic RNA is termed the ribonucleoprotein (RNP) and serves as template for transcription and replication. The RNP needs to be localized in the host nucleus to start an infectious cycle, but is too large to diffuse through the nuclear pore complex. NP comprises at least 2 nuclear localization signals that are responsible for the active RNP import into the nucleus through cellular importin alpha/beta pathway. Later in the infection, nclear export of RNPs are mediated through viral proteins NEP interacting with M1 which binds nucleoproteins. It is possible that nucleoprotein binds directly host exportin-1/XPO1 and plays an active role in RNPs nuclear export. M1 interaction with RNP seems to hide nucleoprotein's nuclear localization signals. Soon after a virion infects a new cell, M1 dissociates from the RNP under acidification of the virion driven by M2 protein. Dissociation of M1 from RNP unmasks nucleoprotein's nuclear localization signals, targeting the RNP to the nucleus. The polypeptide is Nucleoprotein (Aves (whales)).